A 1023-amino-acid chain; its full sequence is Sodium/potassium-transporting ATPase subunit alpha-1 (1023 aa).

The propeptide occupies 1–5 (MGKGV). The segment covering 1–11 (MGKGVGRDKYE) has biased composition (basic and acidic residues). Residues 1–38 (MGKGVGRDKYEPAAVSEHGDKKSKKAKKERDMDELKKE) are disordered. Topologically, residues 6–87 (GRDKYEPAAV…NALTPPPTTP (82 aa)) are cytoplasmic. An N6-acetyllysine modification is found at lysine 9. Tyrosine 10 carries the post-translational modification Phosphotyrosine. Serine 16 carries the phosphoserine; by PKC modification. N6-acetyllysine is present on lysine 21. Residue serine 23 is modified to Phosphoserine; by PKC. Residues 28 to 38 (KERDMDELKKE) are compositionally biased toward basic and acidic residues. Serine 40 and serine 47 each carry phosphoserine. The phosphoinositide-3 kinase binding stretch occupies residues 82–84 (PPP). The chain crosses the membrane as a helical span at residues 88 to 108 (EWVKFCRQLFGGFSMLLWIGA). The Extracellular segment spans residues 109-131 (ILCFLAYGIRSATEEEPPNDDLY). The helical transmembrane segment at 132–152 (LGVVLSAVVIITGCFSYYQEA) threads the bilayer. At 153–288 (KSSKIMESFK…GGQTPIAEEI (136 aa)) the chain is on the cytoplasmic side. The disordered stretch occupies residues 216–235 (SSLTGESEPQTRSPDFTNEN). Position 228 is a phosphoserine (serine 228). Position 260 is a phosphotyrosine (tyrosine 260). The chain crosses the membrane as a helical span at residues 289–308 (EHFIHLITGVAVFLGVSFFI). The Extracellular segment spans residues 309-320 (LSLILEYTWLEA). A helical transmembrane segment spans residues 321 to 338 (VIFLIGIIVANVPEGLLA). Residues 339–772 (TVTVCLTLTA…EEGRLIFDNL (434 aa)) lie on the Cytoplasmic side of the membrane. Aspartate 376 acts as the 4-aspartylphosphate intermediate in catalysis. Residues serine 452 and serine 484 each carry the phosphoserine modification. ATP is bound at residue lysine 487. Tyrosine 542 bears the Phosphotyrosine mark. The mediates interaction with SCN7A stretch occupies residues 596 to 717 (RAAVPDAVGK…QGAIVAVTGD (122 aa)). The residue at position 661 (lysine 661) is an N6-succinyllysine. 2 positions are modified to phosphoserine: serine 668 and serine 675. Mg(2+) contacts are provided by aspartate 717 and aspartate 721. The helical transmembrane segment at 773–792 (KKSIAYTLTSNIPEITPFLI) threads the bilayer. At 793-802 (FIIANIPLPL) the chain is on the extracellular side. Residues 803 to 823 (GTVTILCIDLGTDMVPAISLA) form a helical membrane-spanning segment. Residues 824–843 (YEQAESDIMKRQPRNPKTDK) lie on the Cytoplasmic side of the membrane. A helical membrane pass occupies residues 844–866 (LVNERLISMAYGQIGMIQALGGF). Over 867–918 (FTYFVILAENGFLPFHLLGIRETWDDRWINDVEDSYGQQWTYEQRKIVEFTC) the chain is Extracellular. Residues 919 to 938 (HTAFFVSIVVVQWADLVICK) form a helical membrane-spanning segment. At 939-951 (TRRNSVFQQGMKN) the chain is on the cytoplasmic side. Serine 943 is subject to Phosphoserine; by PKA. The helical transmembrane segment at 952–970 (KILIFGLFEETALAAFLSY) threads the bilayer. The Extracellular segment spans residues 971 to 985 (CPGMGAALRMYPLKP). A helical transmembrane segment spans residues 986 to 1006 (TWWFCAFPYSLLIFVYDEVRK). Topologically, residues 1007-1023 (LIIRRRPGGWVEKETYY) are cytoplasmic.

It belongs to the cation transport ATPase (P-type) (TC 3.A.3) family. Type IIC subfamily. As to quaternary structure, the sodium/potassium-transporting ATPase is composed of a catalytic alpha subunit, an auxiliary non-catalytic beta subunit and an additional regulatory subunit. Interacts with regulatory subunit FXYD1. Interacts with regulatory subunit FXYD3. Interacts with SLC35G1 and STIM1. Interacts with SIK1. Interacts with CLN3; this interaction regulates the sodium/potassium-transporting ATPase complex localization at the plasma membrane. Interacts with SCN7A; activates ATP1A1 P-type sodium:potassium-exchanging transporter activity which indirectly signals to nearby neurons to regulate sodium homeostasis. In terms of processing, phosphorylation on Tyr-10 modulates pumping activity. Phosphorylation of Ser-943 by PKA modulates the response of ATP1A1 to PKC. Dephosphorylation by protein phosphatase 2A (PP2A) following increases in intracellular sodium, leading to increase catalytic activity. Expressed in the central nervous system, in most motor and sensory axons of the ventral and dorsal roots, as well as in the large motor neurons of the ventral horn (at protein level).

The protein resides in the cell membrane. It is found in the basolateral cell membrane. It localises to the sarcolemma. Its subcellular location is the cell projection. The protein localises to the axon. The protein resides in the melanosome. It carries out the reaction K(+)(out) + Na(+)(in) + ATP + H2O = K(+)(in) + Na(+)(out) + ADP + phosphate + H(+). This is the catalytic component of the active enzyme, which catalyzes the hydrolysis of ATP coupled with the exchange of sodium and potassium ions across the plasma membrane. This action creates the electrochemical gradient of sodium and potassium ions, providing the energy for active transport of various nutrients. Could also be part of an osmosensory signaling pathway that senses body-fluid sodium levels and controls salt intake behavior as well as voluntary water intake to regulate sodium homeostasis. This chain is Sodium/potassium-transporting ATPase subunit alpha-1 (Atp1a1), found in Rattus norvegicus (Rat).